We begin with the raw amino-acid sequence, 563 residues long: 3-oxosteroid 1-dehydrogenase (563 aa).

7 to 36 serves as a coordination point for FAD; the sequence is DVVVVGSGAAGMVAALVAAHRGLSTVVVEK.

This sequence belongs to the FAD-dependent oxidoreductase 2 family. 3-oxosteroid dehydrogenase subfamily. It depends on FAD as a cofactor.

The catalysed reaction is a 3-oxosteroid + A = a 3-oxo-Delta(1)-steroid + AH2. It carries out the reaction a 3-oxo-Delta(4)-steroid + A = a 3-oxo-Delta(1,4)-steroid + AH2. The enzyme catalyses 3-oxochol-4-en-22-oyl-CoA + NAD(+) = 3-oxochola-1,4-dien-22-oyl-CoA + NADH + H(+). Functionally, involved in the degradation of cholesterol. Catalyzes the elimination of the C-1 and C-2 hydrogen atoms of the A-ring from the polycyclic ring structure of 3-ketosteroids. Has a clear preference for 3-ketosteroids with a saturated A-ring, displaying highest activity on 5alpha-AD (5alpha-androstane-3,17-dione) and 5alpha-T (5alpha-testosterone, also known as 17beta-hydroxy-5alpha-androstane-3-one). Is also involved in the formation of 3-keto-1,4-diene-steroid from 3-keto-4-ene-steroid. Catalyzes the conversion of 3-oxo-23,24-bisnorchol-4-en-22-oyl-coenzyme A thioester (4-BNC-CoA) to 3-oxo-23,24-bisnorchola-1,4-dien-22-oyl-coenzyme A thioester (1,4-BNC-CoA). This chain is 3-oxosteroid 1-dehydrogenase (kstD), found in Mycobacterium tuberculosis (strain ATCC 25618 / H37Rv).